The following is a 238-amino-acid chain: uncharacterized protein (238 aa).

The N-terminal stretch at 1-28 is a signal peptide; that stretch reads MSRNSRGSGRYVFVVLACVFGYTRAVHA.

This is an uncharacterized protein from Treponema pallidum (strain Nichols).